Consider the following 119-residue polypeptide: Large ribosomal subunit protein uL18 (119 aa).

Belongs to the universal ribosomal protein uL18 family. In terms of assembly, part of the 50S ribosomal subunit; part of the 5S rRNA/L5/L18/L25 subcomplex. Contacts the 5S and 23S rRNAs.

Its function is as follows. This is one of the proteins that bind and probably mediate the attachment of the 5S RNA into the large ribosomal subunit, where it forms part of the central protuberance. This chain is Large ribosomal subunit protein uL18, found in Clostridium kluyveri (strain ATCC 8527 / DSM 555 / NBRC 12016 / NCIMB 10680 / K1).